Consider the following 81-residue polypeptide: Centromere protein X (81 aa).

Met1 carries the post-translational modification N-acetylmethionine.

The protein belongs to the CENP-X/MHF2 family. Heterodimer with CENPX, sometimes called MHF; this interaction stabilizes both partners. MHF heterodimers can assemble to form tetrameric structures. MHF also coassemble with CENPT-CENPW heterodimers at centromeres to form the tetrameric CENP-T-W-S-X complex. Forms a discrete complex with FANCM and CENPX, called FANCM-MHF; this interaction, probably mediated by direct binding between CENPS and FANCM, leads to synergistic activation of double-stranded DNA binding and strongly stimulates FANCM-mediated DNA remodeling. Recruited by FANCM to the Fanconi anemia (FA) core complex, which consists of CENPS, CENPX, FANCA, FANCB, FANCC, FANCE, FANCF, FANCG, FANCL, FANCM, FAAP24 and FAAP100. The FA core complex associates with Bloom syndrome (BLM) complex, which consists of at least BLM, DNA topoisomerase 3-alpha (TOP3A), RMI1/BLAP75, RPA1/RPA70 and RPA2/RPA32. The super complex between FA and BLM is called BRAFT.

The protein localises to the nucleus. The protein resides in the chromosome. It localises to the centromere. Its subcellular location is the kinetochore. DNA-binding component of the Fanconi anemia (FA) core complex. Required for the normal activation of the FA pathway, leading to monoubiquitination of the FANCI-FANCD2 complex in response to DNA damage, cellular resistance to DNA cross-linking drugs, and prevention of chromosomal breakage. In complex with CENPS (MHF heterodimer), crucial cofactor for FANCM in both binding and ATP-dependent remodeling of DNA. Stabilizes FANCM. In complex with CENPS and FANCM (but not other FANC proteins), rapidly recruited to blocked forks and promotes gene conversion at blocked replication forks. In complex with CENPS, CENPT and CENPW (CENP-T-W-S-X heterotetramer), involved in the formation of a functional kinetochore outer plate, which is essential for kinetochore-microtubule attachment and faithful mitotic progression. As a component of MHF and CENP-T-W-S-X complexes, binds DNA and bends it to form a nucleosome-like structure. DNA-binding function is fulfilled in the presence of CENPS, with the following preference for DNA substates: Holliday junction &gt; double-stranded &gt; splay arm &gt; single-stranded. Does not bind DNA on its own. The sequence is that of Centromere protein X (CENPX) from Homo sapiens (Human).